The sequence spans 349 residues: Ferredoxin--NADP reductase 1 (349 aa).

Residues glutamate 36, lysine 44, tyrosine 48, valine 88, leucine 123, aspartate 290, and serine 331 each coordinate FAD.

The protein belongs to the ferredoxin--NADP reductase type 2 family. In terms of assembly, homodimer. Requires FAD as cofactor.

The catalysed reaction is 2 reduced [2Fe-2S]-[ferredoxin] + NADP(+) + H(+) = 2 oxidized [2Fe-2S]-[ferredoxin] + NADPH. The sequence is that of Ferredoxin--NADP reductase 1 from Bacillus cereus (strain ATCC 10987 / NRS 248).